The primary structure comprises 831 residues: uncharacterized protein (831 aa).

Residues 285–311 (ALNLKRQQLKEEQKEQQSTGDRSDVST) form a disordered region. 470–477 (GDTGNGKS) provides a ligand contact to ATP.

This is an uncharacterized protein from Bacillus subtilis (strain 168).